We begin with the raw amino-acid sequence, 877 residues long: Alanine--tRNA ligase (877 aa).

4 residues coordinate Zn(2+): H566, H570, C668, and H672.

The protein belongs to the class-II aminoacyl-tRNA synthetase family. Requires Zn(2+) as cofactor.

The protein localises to the cytoplasm. It carries out the reaction tRNA(Ala) + L-alanine + ATP = L-alanyl-tRNA(Ala) + AMP + diphosphate. Functionally, catalyzes the attachment of alanine to tRNA(Ala) in a two-step reaction: alanine is first activated by ATP to form Ala-AMP and then transferred to the acceptor end of tRNA(Ala). Also edits incorrectly charged Ser-tRNA(Ala) and Gly-tRNA(Ala) via its editing domain. In Staphylococcus aureus (strain USA300 / TCH1516), this protein is Alanine--tRNA ligase.